The chain runs to 141 residues: Nucleoside diphosphate kinase (141 aa).

ATP contacts are provided by lysine 9, phenylalanine 57, arginine 85, threonine 91, arginine 102, and asparagine 112. Histidine 115 (pros-phosphohistidine intermediate) is an active-site residue.

This sequence belongs to the NDK family. Homotetramer. It depends on Mg(2+) as a cofactor.

The protein resides in the cytoplasm. It catalyses the reaction a 2'-deoxyribonucleoside 5'-diphosphate + ATP = a 2'-deoxyribonucleoside 5'-triphosphate + ADP. It carries out the reaction a ribonucleoside 5'-diphosphate + ATP = a ribonucleoside 5'-triphosphate + ADP. Its function is as follows. Major role in the synthesis of nucleoside triphosphates other than ATP. The ATP gamma phosphate is transferred to the NDP beta phosphate via a ping-pong mechanism, using a phosphorylated active-site intermediate. The polypeptide is Nucleoside diphosphate kinase (Chlamydia muridarum (strain MoPn / Nigg)).